The chain runs to 1375 residues: DNA-directed RNA polymerase subunit beta (1375 aa).

It belongs to the RNA polymerase beta chain family. As to quaternary structure, the RNAP catalytic core consists of 2 alpha, 1 beta, 1 beta' and 1 omega subunit. When a sigma factor is associated with the core the holoenzyme is formed, which can initiate transcription.

It carries out the reaction RNA(n) + a ribonucleoside 5'-triphosphate = RNA(n+1) + diphosphate. DNA-dependent RNA polymerase catalyzes the transcription of DNA into RNA using the four ribonucleoside triphosphates as substrates. The polypeptide is DNA-directed RNA polymerase subunit beta (Coxiella burnetii (strain CbuG_Q212) (Coxiella burnetii (strain Q212))).